A 344-amino-acid polypeptide reads, in one-letter code: Flavonoid 7-O-methyltransferase 1A (344 aa).

Aspartate 211 contacts S-adenosyl-L-methionine. The active-site Proton acceptor is histidine 249.

This sequence belongs to the class I-like SAM-binding methyltransferase superfamily. Cation-independent O-methyltransferase family. Homodimer.

It carries out the reaction apigenin + S-adenosyl-L-methionine = genkwanin + S-adenosyl-L-homocysteine + H(+). It catalyses the reaction luteolin + S-adenosyl-L-methionine = luteolin 7-methyl ether + S-adenosyl-L-homocysteine + H(+). The catalysed reaction is quercetin + S-adenosyl-L-methionine = rhamnetin + S-adenosyl-L-homocysteine + H(+). The enzyme catalyses (2S)-naringenin + S-adenosyl-L-methionine = (2S)-sakuranetin + S-adenosyl-L-homocysteine + H(+). It carries out the reaction kaempferol + S-adenosyl-L-methionine = kaempferol 7-methyl ether + S-adenosyl-L-homocysteine + H(+). It catalyses the reaction isorhamnetin + S-adenosyl-L-methionine = rhamnacene + S-adenosyl-L-homocysteine + H(+). The catalysed reaction is 4',7,8-trihydroxyflavone + S-adenosyl-L-methionine = 4',8-dihydroxy-7-methoxyflavone + S-adenosyl-L-homocysteine. The enzyme catalyses scutellarein + S-adenosyl-L-methionine = scutellarein 7-methyl ether + S-adenosyl-L-homocysteine. Its pathway is flavonoid metabolism. Its function is as follows. Flavonoid 7-O-methyltransferase involved in the biosynthesis of polymethoxylated flavonoids natural products such as pebrellin, aroma compounds which contribute to the flavor of peppermint, and exhibit pharmacological activities such as anti-allergic, anti-oxidant, antibacterial, anti-proliferative, and anti-inflammatory effects. Catalyzes S-adenosylmethionine-dependent regioselective 7-O-methylation of flavonoids; active on various hydroxylated flavonoid substrates, including luteolin (LUT), quercetin, kaempferol, isorhamnetin, apigenin (API), scutellarein (6-hydroxy-apigenin, 6-OH-API, SCU), 7,8,4'-trihydroxy-flavone and naringenin (NAR), and, with a lower efficiency, 7,8,3',4'-tetrahydroxy-flavone, taxifolin, hesperetin and genistein. This Mentha piperita (Peppermint) protein is Flavonoid 7-O-methyltransferase 1A.